A 213-amino-acid polypeptide reads, in one-letter code: MAGSSGTNGQGFFTTRVDTFLNWARSNSLMPMPMGLACCAIEMMGFAGPKYDSARFGSEAMRFSPRQADLMIVAGWCSYKMSHAIRRVWDQMGDPKWCIAMGACASTGGMHRCYGVVQGVDNFLPVDVYISGCPPRPESVLHALMDIQEKIRNEYSVVQDYEFGKARERAPIMPENTNRFPGQLEKPKTSTLTLEAPDADDAEEASTPEPVAA.

[4Fe-4S] cluster is bound by residues Cys38, Cys39, Cys104, and Cys133. Positions 172 to 213 (IMPENTNRFPGQLEKPKTSTLTLEAPDADDAEEASTPEPVAA) are disordered. Residues 197-206 (PDADDAEEAS) are compositionally biased toward acidic residues.

The protein belongs to the complex I 20 kDa subunit family. In terms of assembly, NDH-1 is composed of 14 different subunits. Subunits NuoB, C, D, E, F, and G constitute the peripheral sector of the complex. Requires [4Fe-4S] cluster as cofactor.

It localises to the cell inner membrane. The enzyme catalyses a quinone + NADH + 5 H(+)(in) = a quinol + NAD(+) + 4 H(+)(out). Its function is as follows. NDH-1 shuttles electrons from NADH, via FMN and iron-sulfur (Fe-S) centers, to quinones in the respiratory chain. The immediate electron acceptor for the enzyme in this species is believed to be a menaquinone. Couples the redox reaction to proton translocation (for every two electrons transferred, four hydrogen ions are translocated across the cytoplasmic membrane), and thus conserves the redox energy in a proton gradient. The protein is NADH-quinone oxidoreductase subunit B (nuoB) of Salinibacter ruber (strain DSM 13855 / M31).